Here is a 271-residue protein sequence, read N- to C-terminus: 2-aminophenol 1,6-dioxygenase alpha subunit (271 aa).

This sequence belongs to the LigB/MhpB extradiol dioxygenase family. In terms of assembly, heterotetramer of 2 alpha and 2 beta subunits.

In terms of biological role, component of the 2-aminophenol 1,6-dioxygenase complex that catalyzes the ring fission of 2-aminophenol to produce 2-aminomuconic 6-semialdehyde. AmnA seems to have a role in the stability of the complex. The chain is 2-aminophenol 1,6-dioxygenase alpha subunit (amnA) from Pseudomonas sp.